A 951-amino-acid polypeptide reads, in one-letter code: Pheromone-regulated membrane protein 10 (951 aa).

Composition is skewed to polar residues over residues 1-10 (MSSSYGNNGD), 68-84 (GGST…NVGS), and 92-104 (RTAS…NRRQ). Disordered stretches follow at residues 1-293 (MSSS…EDPI), 313-366 (AGKS…TMVS), and 433-487 (NDSS…LPNF). The segment covering 126–135 (DDDDEEEEEH) has biased composition (acidic residues). Over residues 219–234 (PHQETNDGRNSAESHS) the composition is skewed to basic and acidic residues. Polar residues-rich tracts occupy residues 318-332 (PGTQ…SSEH), 354-366 (PFNQ…TMVS), and 468-484 (SQTN…SMNL). 10 helical membrane-spanning segments follow: residues 635 to 655 (WVSV…AFGG), 657 to 677 (WINM…QFIV), 687 to 707 (VFEV…GSIP), 711 to 731 (ICFG…YIIL), 753 to 773 (IIYS…FGWI), 786 to 806 (NISP…LGLI), 811 to 831 (WTQL…TYFS), 841 to 861 (FTSA…SRIW), 863 to 883 (GFAV…GVAS), and 918 to 938 (VTMI…TLFI).

Belongs to the ThrE exporter (TC 2.A.79) family.

The protein localises to the membrane. This is Pheromone-regulated membrane protein 10 from Kluyveromyces lactis (strain ATCC 8585 / CBS 2359 / DSM 70799 / NBRC 1267 / NRRL Y-1140 / WM37) (Yeast).